Reading from the N-terminus, the 680-residue chain is Methionine--tRNA ligase (680 aa).

The 'HIGH' region signature appears at 14 to 24; that stretch reads PYANGPIHLGH. 4 residues coordinate Zn(2+): Cys145, Cys148, Cys158, and Cys161. Positions 330–334 match the 'KMSKS' region motif; the sequence is KMSKS. Lys333 is a binding site for ATP. Residues 579-680 enclose the tRNA-binding domain; sequence DFAKVDFRIA…DGAQPGMRVK (102 aa).

This sequence belongs to the class-I aminoacyl-tRNA synthetase family. MetG type 1 subfamily. As to quaternary structure, homodimer. Zn(2+) serves as cofactor.

It is found in the cytoplasm. It carries out the reaction tRNA(Met) + L-methionine + ATP = L-methionyl-tRNA(Met) + AMP + diphosphate. In terms of biological role, is required not only for elongation of protein synthesis but also for the initiation of all mRNA translation through initiator tRNA(fMet) aminoacylation. This is Methionine--tRNA ligase from Hydrogenovibrio crunogenus (strain DSM 25203 / XCL-2) (Thiomicrospira crunogena).